The following is a 145-amino-acid chain: MYSLHLLLRASPAALLLILCLQLGTTKAQEDTTSRQLMTMDLQMLQIDTSEEATVVLEVSTDLRECMVVKAYLLSNIPIEGNFNYKFTSCLCNNYPRRFFWDLQTNSTVRITAVVDVIRELGICPDDWAVIPIKANRFSITKSLP.

Residues 1–28 (MYSLHLLLRASPAALLLILCLQLGTTKA) form the signal peptide. Position 29 is a pyrrolidone carboxylic acid (glutamine 29). Intrachain disulfides connect cysteine 66/cysteine 92 and cysteine 90/cysteine 124. Asparagine 106 carries an N-linked (GlcNAc...) asparagine glycan.

Belongs to the PIP family. Monomer. Interacts with AZGP1.

The protein resides in the secreted. This Bos taurus (Bovine) protein is Prolactin-inducible protein homolog (PIP).